We begin with the raw amino-acid sequence, 227 residues long: HTH-type transcriptional regulator ArcR (227 aa).

41–130 (VRRYNKGQII…LEYLCKNHDD (90 aa)) is a binding site for a nucleoside 3',5'-cyclic phosphate. One can recognise an HTH crp-type domain in the interval 156 to 227 (KLARERIEKV…KNGKNWMVIK (72 aa)). The segment at residues 189–208 (IQLLSDLAGISRETTGHIVH) is a DNA-binding region (H-T-H motif).

It localises to the cytoplasm. In terms of biological role, positively regulates the expression of the arcABDCR operon under anaerobic conditions, thus playing an essential role in arginine catabolism. May also control the expression of genes encoding proteins which are involved in anaerobic metabolism. Can bind cyclic AMP. The protein is HTH-type transcriptional regulator ArcR (arcR) of Staphylococcus haemolyticus (strain JCSC1435).